We begin with the raw amino-acid sequence, 340 residues long: Replication factor C subunit 3 (340 aa).

An N-acetylserine modification is found at Ser2. Residues 16-19 (VEKY), Arg20, Tyr28, 53-61 (GPPGTGKTS), Asn148, and Arg206 each bind ATP.

This sequence belongs to the activator 1 small subunits family. In terms of assembly, replication factor C (RFC) is a heteropentamer of subunits RFC1, RFC2, RFC3, RFC4 and RFC5 and forms a complex with POL30/PCNA in the presence of ATP. Component of the RAD24-RFC complex which consists of RAD14, RFC2, RFC3, RFC4 and RFC5 and associates with the checkpoint clamp DDC1:MEC3:RAD17 complex. Component of the ELG1-RFC complex which consists of ELG1, RFC2, RFC3, RFC4 and RFC5. Component of the CTF18-RFC complex, which consists of CTF18, CTF8, DCC1, RFC2, RFC3, RFC4 and RFC5. RFC3 interacts with ECO1 and POL30/PCNA.

Its subcellular location is the nucleus. Its function is as follows. Component of ATP-dependent clamp loader (RFC and RFC-like) complexes for DNA clamps, such as the POL30/PCNA homotrimer and the checkpoint clamp DDC1:MEC3:RAD17 complex. During a clamp loading circle, the RFC:clamp complex binds to DNA and the recognition of the double-stranded/single-stranded junction stimulates ATP hydrolysis by RFC. The complex presumably provides bipartite ATP sites in which one subunit supplies a catalytic site for hydrolysis of ATP bound to the neighboring subunit. Dissociation of RFC from the clamp leaves the clamp encircling DNA. Component of the replication factor C (RFC or activator 1) complex which loads POL30/PCNA and acts during elongation of primed DNA templates by DNA polymerase delta and epsilon. RFC has an essential but redundant activity in sister chromatid cohesion establishment. Component of the RFC-like complex CTF18-RFC which is required for efficient establishment of chromosome cohesion during S-phase and may load or unload POL30/PCNA. Component of the RFC-like RAD24-RFC complex which loads the checkpoint clamp DDC1:MEC3:RAD17 complex and is involved in DNA repair pathways. Component of the RFC-like ELG1-RFC complex which appears to have a role in DNA replication, replication fork re-start, recombination and repair. RFC3 supplies a catalytic site to the ATP site of RFC4. The sequence is that of Replication factor C subunit 3 (RFC3) from Saccharomyces cerevisiae (strain ATCC 204508 / S288c) (Baker's yeast).